A 208-amino-acid chain; its full sequence is MDFYYLPGSAPCRSVLMTAKALGIELNKKLLNLQAGEHLKPEFLKINPQHTIPTLVDGDFALWESRAIMVYLVEKYGKNDSLFPKCPKKRAVINQRLYFDMGTLYKSFADYYYPQIFAKAPADPELYKKMEAAFDFLNTFLEGHQYVAGDSLTVADLALLASVSTFEVAGFDFSKYANVAKWYANAKTVAPGFDENWEGCLEFKKFFN.

Residues 1–80 (MDFYYLPGSA…YLVEKYGKND (80 aa)) form the GST N-terminal domain. Glutathione-binding positions include Ser9, 50 to 52 (HTI), and 64 to 66 (ESR). One can recognise a GST C-terminal domain in the interval 86–207 (CPKKRAVINQ…EGCLEFKKFF (122 aa)).

The protein belongs to the GST superfamily. Theta family. Homodimer.

It carries out the reaction RX + glutathione = an S-substituted glutathione + a halide anion + H(+). Conjugation of reduced glutathione to a wide number of exogenous and endogenous hydrophobic electrophiles. The protein is Glutathione S-transferase 1-1 (GST1) of Lucilia cuprina (Green bottle fly).